Reading from the N-terminus, the 189-residue chain is Peptidyl-tRNA hydrolase (189 aa).

Tyr15 is a binding site for tRNA. Catalysis depends on His20, which acts as the Proton acceptor. Residues Phe64 and Asn66 each coordinate tRNA.

It belongs to the PTH family. In terms of assembly, monomer.

It is found in the cytoplasm. It catalyses the reaction an N-acyl-L-alpha-aminoacyl-tRNA + H2O = an N-acyl-L-amino acid + a tRNA + H(+). In terms of biological role, hydrolyzes ribosome-free peptidyl-tRNAs (with 1 or more amino acids incorporated), which drop off the ribosome during protein synthesis, or as a result of ribosome stalling. Its function is as follows. Catalyzes the release of premature peptidyl moieties from peptidyl-tRNA molecules trapped in stalled 50S ribosomal subunits, and thus maintains levels of free tRNAs and 50S ribosomes. The chain is Peptidyl-tRNA hydrolase from Persephonella marina (strain DSM 14350 / EX-H1).